A 615-amino-acid polypeptide reads, in one-letter code: ATP-dependent zinc metalloprotease FtsH 2 (615 aa).

The Cytoplasmic portion of the chain corresponds to 1–7; that stretch reads MNEPNRN. A helical membrane pass occupies residues 8–28; the sequence is FFWIFFLILGIFWLQSVWFGS. At 29–99 the chain is on the periplasmic side; that stretch reads RTVQQIPYSQ…VTYRREIENT (71 aa). The chain crosses the membrane as a helical span at residues 100–120; sequence FFRDLLSWVVPALIFVAVFLY. The Cytoplasmic portion of the chain corresponds to 121 to 615; that stretch reads FSRKFAEKGG…APQRERDLSV (495 aa). 195-202 contributes to the ATP binding site; that stretch reads GPPGTGKT. His-418 contacts Zn(2+). Glu-419 is an active-site residue. Zn(2+) contacts are provided by His-422 and Asp-495.

This sequence in the central section; belongs to the AAA ATPase family. The protein in the C-terminal section; belongs to the peptidase M41 family. As to quaternary structure, homohexamer. The cofactor is Zn(2+).

Its subcellular location is the cell inner membrane. Its function is as follows. Acts as a processive, ATP-dependent zinc metallopeptidase for both cytoplasmic and membrane proteins. Plays a role in the quality control of integral membrane proteins. This Bdellovibrio bacteriovorus (strain ATCC 15356 / DSM 50701 / NCIMB 9529 / HD100) protein is ATP-dependent zinc metalloprotease FtsH 2.